Here is a 199-residue protein sequence, read N- to C-terminus: Protein GrpE (199 aa).

Residues 20-52 are disordered; the sequence is YKVENEILEEETDEESQHQEPALGHPSYTALEE.

Belongs to the GrpE family. Homodimer.

It is found in the cytoplasm. Its function is as follows. Participates actively in the response to hyperosmotic and heat shock by preventing the aggregation of stress-denatured proteins, in association with DnaK and GrpE. It is the nucleotide exchange factor for DnaK and may function as a thermosensor. Unfolded proteins bind initially to DnaJ; upon interaction with the DnaJ-bound protein, DnaK hydrolyzes its bound ATP, resulting in the formation of a stable complex. GrpE releases ADP from DnaK; ATP binding to DnaK triggers the release of the substrate protein, thus completing the reaction cycle. Several rounds of ATP-dependent interactions between DnaJ, DnaK and GrpE are required for fully efficient folding. This Legionella pneumophila (strain Corby) protein is Protein GrpE.